The chain runs to 265 residues: 3-methyl-2-oxobutanoate hydroxymethyltransferase (265 aa).

Residues D45 and D84 each contribute to the Mg(2+) site. Residues 45–46 (DS), D84, and K112 each bind 3-methyl-2-oxobutanoate. E114 provides a ligand contact to Mg(2+). E181 acts as the Proton acceptor in catalysis.

Belongs to the PanB family. In terms of assembly, homodecamer; pentamer of dimers. Requires Mg(2+) as cofactor.

The protein localises to the cytoplasm. It catalyses the reaction 3-methyl-2-oxobutanoate + (6R)-5,10-methylene-5,6,7,8-tetrahydrofolate + H2O = 2-dehydropantoate + (6S)-5,6,7,8-tetrahydrofolate. Its pathway is cofactor biosynthesis; (R)-pantothenate biosynthesis; (R)-pantoate from 3-methyl-2-oxobutanoate: step 1/2. Its function is as follows. Catalyzes the reversible reaction in which hydroxymethyl group from 5,10-methylenetetrahydrofolate is transferred onto alpha-ketoisovalerate to form ketopantoate. The sequence is that of 3-methyl-2-oxobutanoate hydroxymethyltransferase from Yersinia pseudotuberculosis serotype IB (strain PB1/+).